A 289-amino-acid polypeptide reads, in one-letter code: Phenylalanine-4-hydroxylase (289 aa).

The Fe cation site is built by His144, His149, and Glu189.

It belongs to the biopterin-dependent aromatic amino acid hydroxylase family. The cofactor is Fe(2+).

It carries out the reaction (6R)-L-erythro-5,6,7,8-tetrahydrobiopterin + L-phenylalanine + O2 = (4aS,6R)-4a-hydroxy-L-erythro-5,6,7,8-tetrahydrobiopterin + L-tyrosine. The protein operates within amino-acid degradation; L-phenylalanine degradation; acetoacetate and fumarate from L-phenylalanine: step 1/6. This chain is Phenylalanine-4-hydroxylase (phhA), found in Vibrio cholerae serotype O1 (strain ATCC 39315 / El Tor Inaba N16961).